The following is a 1453-amino-acid chain: NK-tumor recognition protein (1453 aa).

Residues 10–175 (HFDIEINREP…ADVRVIDCGV (166 aa)) enclose the PPIase cyclophilin-type domain. Positions 187-625 (KKRKKPTCSE…RWKPGQKPWK (439 aa)) are disordered. Over residues 195-213 (SEGSDSSSRSSSSSESSSE) the composition is skewed to low complexity. Residues 221-240 (IRRRRHKRRPKVRHAKKRRK) show a composition bias toward basic residues. A compositionally biased stretch (basic and acidic residues) spans 259 to 286 (YSERSDVNEKRSVDSNTKREKPVVRPEE). Lysine 323 participates in a covalent cross-link: Glycyl lysine isopeptide (Lys-Gly) (interchain with G-Cter in SUMO2). Over residues 329-348 (SGRKIKGRGTIRYHTPPRSR) the composition is skewed to basic residues. 3 positions are modified to phosphoserine: serine 379, serine 401, and serine 416. Residues 382 to 402 (KWSKGDKLSDPCSSRWDERSL) show a composition bias toward basic and acidic residues. Residues 403 to 421 (SQRSRSWSYNGYYSDLSTA) are compositionally biased toward polar residues. The segment covering 425-460 (DGHHKKHRKEKKFKHKKKAKKQKHCRRHRQTKKRRI) has biased composition (basic residues). Basic and acidic residues predominate over residues 514–531 (SSRDSYRSKSHSRSDSRG). Low complexity-rich tracts occupy residues 532–546 (SSRSRAVSKSSSRSL) and 554–565 (SSRSGPRRTSIS). Residues lysine 576 and lysine 579 each participate in a glycyl lysine isopeptide (Lys-Gly) (interchain with G-Cter in SUMO2) cross-link. Position 611 is a phosphoserine (serine 611). Residue lysine 637 forms a Glycyl lysine isopeptide (Lys-Gly) (interchain with G-Cter in SUMO2) linkage. At serine 646 the chain carries Phosphoserine. A compositionally biased stretch (polar residues) spans 651 to 661 (TNIKATVSSSS). The interval 651–1453 (TNIKATVSSS…RSPSESSRYS (803 aa)) is disordered. Glycyl lysine isopeptide (Lys-Gly) (interchain with G-Cter in SUMO2) cross-links involve residues lysine 654 and lysine 664. 2 stretches are compositionally biased toward low complexity: residues 682 to 726 (RSSG…SSRS) and 736 to 749 (SQHSRSSSYTSVSS). Positions 755–772 (AMFRSNRKKSVTSHKRHR) are enriched in basic residues. Positions 773–789 (SNSEKTLHSKYVRGREK) are enriched in basic and acidic residues. Residues 799–809 (SRSSLDYSSDS) show a composition bias toward low complexity. Composition is skewed to basic and acidic residues over residues 820 to 852 (PEKEKQGKVEALNDKQGKGREEGKPKPEWECPR) and 859 to 868 (KDHSRDDSVS). Phosphoserine occurs at positions 880, 882, 884, and 900. Over residues 887–902 (DVTKSRKSDPRRGSEK) the composition is skewed to basic and acidic residues. Over residues 903-913 (EEGEASSDSES) the composition is skewed to acidic residues. A compositionally biased stretch (low complexity) spans 948 to 958 (SSASESESSCS). A compositionally biased stretch (basic and acidic residues) spans 966–982 (EPQKQKHSKDDLKGDHT). The span at 983–1005 (KRAREKSKAKKDKKHKAPKRKQA) shows a compositional bias: basic residues. The segment covering 1030-1045 (DPKEKRHVSEKCEAVK) has biased composition (basic and acidic residues). Serine 1139 and serine 1148 each carry phosphoserine. Residues 1170 to 1180 (QESSMSESKTL) show a composition bias toward polar residues. Residues 1189-1199 (SSTSVTSPVET) show a composition bias toward low complexity. Serine 1195 carries the post-translational modification Phosphoserine. Residues lysine 1208 and lysine 1249 each participate in a glycyl lysine isopeptide (Lys-Gly) (interchain with G-Cter in SUMO2) cross-link. The interval 1303–1453 (RSPHRSRSKS…RSPSESSRYS (151 aa)) is arg/Ser tandem repeat-rich. Positions 1322–1346 (SVSYSHSRSRSRSSTSSYRSRSYSR) are enriched in low complexity. The span at 1369–1379 (HSHRTSSRSRS) shows a compositional bias: basic residues. Low complexity predominate over residues 1380 to 1401 (RSSSYDLHSRSRSYTYDSYYSR). The segment covering 1416–1426 (RGRSYNRRSRS) has biased composition (basic residues).

It localises to the cell membrane. It carries out the reaction [protein]-peptidylproline (omega=180) = [protein]-peptidylproline (omega=0). Its activity is regulated as follows. Inhibited by cyclosporin A (CsA). PPIase that catalyzes the cis-trans isomerization of proline imidic peptide bonds in oligopeptides and may therefore assist protein folding. Component of a putative tumor-recognition complex involved in the function of NK cells. The protein is NK-tumor recognition protein of Mus musculus (Mouse).